Reading from the N-terminus, the 1009-residue chain is UvrABC system protein A (1009 aa).

Residue Gly32–Ser39 participates in ATP binding. ABC transporter domains are found at residues Trp314–Gln592 and Arg612–Arg941. Gly645–Ser652 contacts ATP. Residues Cys744 to Cys770 form a C4-type zinc finger. The disordered stretch occupies residues Lys956–Ala1009. Over residues Arg964–Thr997 the composition is skewed to low complexity. Residues Ala998–Ala1009 are compositionally biased toward basic residues.

The protein belongs to the ABC transporter superfamily. UvrA family. As to quaternary structure, forms a heterotetramer with UvrB during the search for lesions.

Its subcellular location is the cytoplasm. Functionally, the UvrABC repair system catalyzes the recognition and processing of DNA lesions. UvrA is an ATPase and a DNA-binding protein. A damage recognition complex composed of 2 UvrA and 2 UvrB subunits scans DNA for abnormalities. When the presence of a lesion has been verified by UvrB, the UvrA molecules dissociate. The chain is UvrABC system protein A from Streptomyces avermitilis (strain ATCC 31267 / DSM 46492 / JCM 5070 / NBRC 14893 / NCIMB 12804 / NRRL 8165 / MA-4680).